The sequence spans 452 residues: Multifunctional glycoside hydrolase (452 aa).

Residues Gln17, His118, and Asn162 each coordinate substrate. The Proton donor role is filled by Glu163. Tyr303 contacts substrate. The active-site Nucleophile is the Glu361. Substrate-binding positions include Trp407 and 414-415 (EW).

It belongs to the glycosyl hydrolase 1 family. Monomer. Homotrimer.

It carries out the reaction Hydrolysis of terminal, non-reducing beta-D-glucosyl residues with release of beta-D-glucose.. It catalyses the reaction Hydrolysis of terminal non-reducing beta-D-galactose residues in beta-D-galactosides.. The catalysed reaction is Hydrolysis of (1-&gt;4)-beta-D-xylans, to remove successive D-xylose residues from the non-reducing termini.. The enzyme catalyses Hydrolysis of (1-&gt;4)-linkages in (1-&gt;4)-beta-D-glucans, to remove successive glucose units.. It carries out the reaction Hydrolysis of (1-&gt;4)-beta-D-glucosidic linkages in cellulose and cellotetraose, releasing cellobiose from the non-reducing ends of the chains.. Its pathway is glycan metabolism; beta-D-glucan degradation. The protein operates within glycan metabolism; cellulose degradation. Its activity is regulated as follows. Slight activation by Mn(2+), Ni(2+) and K(+). Slight inhibition by Fe(3+), Zn(2+), Co(2+), Mg(2+), Cu(2+), Na(+) and NH4(+). Its function is as follows. Has high beta-D-glucosidase, exoglucanase, beta-D-xylosidase, beta-D-galactosidase, and transgalactosylation activities in vitro. Has a very broad substrate specificity with the highest activity with p-nitrophenyl beta-D-galactopyranoside (pNPGal) as substrate. Active with pNP-beta-D-glucopyranoside (pNPGlu), pNP-beta-D-cellobioside (pNPC), lactose, pNP-beta-D-xylopyranoside (pNPX) and cellobiose in the order of decreasing activity, respectively. Very low activity with soluble polysaccharides synanthrin and locust bean gum. Very low, but detectable activity with insoluble substrates such as cotton and filter paper. No activity with pNP-alpha-L-arabinofuranoside (pNPAr) or carboxymethylcellulose (CMC) as substrates. Synthesizes galactooligosaccharides (GalOS) from lactose. Hydrolyzes pretreated corn stover releasing both glucose and xylose. This multifunctional enzyme may provide C.owensensis the benefit of utilizing a wide variety of available carbon sources in its natural growing environment as the ability to convert a wide range of soluble oligosaccharides to monoses is required in order to assimilate them. This is Multifunctional glycoside hydrolase from Caldicellulosiruptor owensensis (strain ATCC 700167 / DSM 13100 / OL).